We begin with the raw amino-acid sequence, 321 residues long: Ferredoxin--NADP reductase (321 aa).

Asp34, Gln42, Tyr47, Val87, Phe119, Asp278, and Thr319 together coordinate FAD.

This sequence belongs to the ferredoxin--NADP reductase type 2 family. Homodimer. It depends on FAD as a cofactor.

The catalysed reaction is 2 reduced [2Fe-2S]-[ferredoxin] + NADP(+) + H(+) = 2 oxidized [2Fe-2S]-[ferredoxin] + NADPH. The polypeptide is Ferredoxin--NADP reductase (Streptococcus pneumoniae serotype 4 (strain ATCC BAA-334 / TIGR4)).